Reading from the N-terminus, the 91-residue chain is DNA-binding protein HU (91 aa).

Belongs to the bacterial histone-like protein family. In terms of assembly, homodimer.

Its function is as follows. Histone-like DNA-binding protein which is capable of wrapping DNA to stabilize it, and thus to prevent its denaturation under extreme environmental conditions. The polypeptide is DNA-binding protein HU (hup) (Streptococcus thermophilus).